The chain runs to 399 residues: Elongation factor Tu (399 aa).

The tr-type G domain maps to 10-204; it reads KPHVNIGTIG…AVDTSIPEPE (195 aa). The interval 19-26 is G1; that stretch reads GHVDHGKT. GTP is bound at residue 19–26; that stretch reads GHVDHGKT. Threonine 26 contacts Mg(2+). Residues 60–64 form a G2 region; the sequence is GITIN. Residues 81-84 are G3; it reads DCPG. GTP is bound by residues 81 to 85 and 136 to 139; these read DCPGH and NKCD. Residues 136-139 form a G4 region; that stretch reads NKCD. The interval 174–176 is G5; it reads SGL.

Belongs to the TRAFAC class translation factor GTPase superfamily. Classic translation factor GTPase family. EF-Tu/EF-1A subfamily. In terms of assembly, monomer.

The protein localises to the cytoplasm. It carries out the reaction GTP + H2O = GDP + phosphate + H(+). In terms of biological role, GTP hydrolase that promotes the GTP-dependent binding of aminoacyl-tRNA to the A-site of ribosomes during protein biosynthesis. The protein is Elongation factor Tu of Prochlorococcus marinus (strain MIT 9303).